Reading from the N-terminus, the 121-residue chain is Small ribosomal subunit protein uS13 (121 aa).

Positions Arg89–Lys121 are disordered. Over residues Gln100 to Lys121 the composition is skewed to basic residues.

Belongs to the universal ribosomal protein uS13 family. As to quaternary structure, part of the 30S ribosomal subunit. Forms a loose heterodimer with protein S19. Forms two bridges to the 50S subunit in the 70S ribosome.

Located at the top of the head of the 30S subunit, it contacts several helices of the 16S rRNA. In the 70S ribosome it contacts the 23S rRNA (bridge B1a) and protein L5 of the 50S subunit (bridge B1b), connecting the 2 subunits; these bridges are implicated in subunit movement. Contacts the tRNAs in the A and P-sites. In Prochlorococcus marinus subsp. pastoris (strain CCMP1986 / NIES-2087 / MED4), this protein is Small ribosomal subunit protein uS13.